Consider the following 391-residue polypeptide: Na(+)/H(+) antiporter NhaA (391 aa).

12 helical membrane-spanning segments follow: residues 9–29 (FQLEAASGLLLIAAAVLALII), 36–56 (YLYSGLLDVPVAVQIGALNIA), 59–79 (LLLWINDGLMALFFLLIGLEV), 95–115 (ILPATAAVGGMVVPALIYWFI), 123–143 (VAGWAIPTATDIAFALGVLAL), 154–174 (LFLMTLAIIDDLGAIIVIALF), 177–197 (GTLSSVSLLLAAACLVVLIAM), 213–235 (LILWVCVLKSGVHATLAGVALAL), 259–279 (WVAYAILPLFAFANAGVSLAG), 293–313 (IAVGLLLGKTVGVFGLTWLAV), 329–349 (ILGVAILCGIGFTMSLFVGSL), and 364–384 (MGILTGSFFAAVIGYAVTAMA).

This sequence belongs to the NhaA Na(+)/H(+) (TC 2.A.33) antiporter family.

The protein resides in the cell inner membrane. It carries out the reaction Na(+)(in) + 2 H(+)(out) = Na(+)(out) + 2 H(+)(in). Functionally, na(+)/H(+) antiporter that extrudes sodium in exchange for external protons. The chain is Na(+)/H(+) antiporter NhaA from Pseudomonas putida (strain GB-1).